Reading from the N-terminus, the 486-residue chain is Membrane-bound lytic murein transglycosylase F (486 aa).

An N-terminal signal peptide occupies residues 1-21 (MKRLKINYILIGVVTLLLALA). Residues 22–268 (LWPNITWRGG…RLEEKYLGHV (247 aa)) form a non-LT domain region. The interval 269-486 (GSFDYVDTKT…AVTPELALNF (218 aa)) is LT domain. Glutamate 313 is a catalytic residue.

In the N-terminal section; belongs to the bacterial solute-binding protein 3 family. It in the C-terminal section; belongs to the transglycosylase Slt family.

It is found in the cell outer membrane. It catalyses the reaction Exolytic cleavage of the (1-&gt;4)-beta-glycosidic linkage between N-acetylmuramic acid (MurNAc) and N-acetylglucosamine (GlcNAc) residues in peptidoglycan, from either the reducing or the non-reducing ends of the peptidoglycan chains, with concomitant formation of a 1,6-anhydrobond in the MurNAc residue.. Functionally, murein-degrading enzyme that degrades murein glycan strands and insoluble, high-molecular weight murein sacculi, with the concomitant formation of a 1,6-anhydromuramoyl product. Lytic transglycosylases (LTs) play an integral role in the metabolism of the peptidoglycan (PG) sacculus. Their lytic action creates space within the PG sacculus to allow for its expansion as well as for the insertion of various structures such as secretion systems and flagella. In Serratia proteamaculans (strain 568), this protein is Membrane-bound lytic murein transglycosylase F.